The chain runs to 338 residues: Lipoate-protein ligase A (338 aa).

In terms of domain architecture, BPL/LPL catalytic spans 29 to 216; it reads SPDQRVLFLW…AFFNYYDEKV (188 aa). ATP-binding positions include arginine 71, 76–79, and lysine 134; that span reads GAVF. Lysine 134 lines the (R)-lipoate pocket.

This sequence belongs to the LplA family. In terms of assembly, monomer.

The protein resides in the cytoplasm. It carries out the reaction L-lysyl-[lipoyl-carrier protein] + (R)-lipoate + ATP = N(6)-[(R)-lipoyl]-L-lysyl-[lipoyl-carrier protein] + AMP + diphosphate + H(+). Its pathway is protein modification; protein lipoylation via exogenous pathway; protein N(6)-(lipoyl)lysine from lipoate: step 1/2. It functions in the pathway protein modification; protein lipoylation via exogenous pathway; protein N(6)-(lipoyl)lysine from lipoate: step 2/2. Catalyzes both the ATP-dependent activation of exogenously supplied lipoate to lipoyl-AMP and the transfer of the activated lipoyl onto the lipoyl domains of lipoate-dependent enzymes. This chain is Lipoate-protein ligase A, found in Yersinia enterocolitica serotype O:8 / biotype 1B (strain NCTC 13174 / 8081).